Consider the following 261-residue polypeptide: uncharacterized protein (261 aa).

Positions 7 to 122 (TAVLADDEPL…RLASCCEKLQ (116 aa)) constitute a Response regulatory domain. 4-aspartylphosphate is present on D54. The HTH LytTR-type domain maps to 157-261 (LKASKGEEIH…RALQHLFKVS (105 aa)).

This is an uncharacterized protein from Vibrio cholerae serotype O1 (strain ATCC 39315 / El Tor Inaba N16961).